An 87-amino-acid polypeptide reads, in one-letter code: HssA/B-like protein 28 (87 aa).

This sequence belongs to the hssA/B family.

The chain is HssA/B-like protein 28 (hssl28) from Dictyostelium discoideum (Social amoeba).